A 210-amino-acid chain; its full sequence is Phosphate propanoyltransferase (210 aa).

Residue 26–28 (ISN) coordinates CoA. H30 and H32 together coordinate Zn(2+). Residues K71 and R78 each contribute to the CoA site. R84 contacts phosphate. Zn(2+) contacts are provided by E90, H138, H140, and H186. N193 provides a ligand contact to CoA.

Belongs to the PduL family. Requires Zn(2+) as cofactor.

The protein resides in the bacterial microcompartment. The enzyme catalyses propanoyl-CoA + phosphate = propanoyl phosphate + CoA. It participates in polyol metabolism; 1,2-propanediol degradation. Functionally, involved in 1,2-propanediol (1,2-PD) utilization within the bacterial microcompartment (BMC) dedicated to 1,2-PD degradation by catalyzing the conversion of propanoyl-CoA to propanoyl-phosphate. Required for optimal growth on 1,2-PD. CoA is regenerated within the BMC (for use by PduP) via this enzyme, although there must also be cofactor transport across the BMC. Directly targeted to the BMC. Its function is as follows. Expression of a cosmid containing the full 21-gene pdu operon in E.coli allows E.coli to grow on 1,2-propanediol (1,2-PD) with the appearance of bacterial microcompartments (BMC) in its cytoplasm. The 1,2-PD-specific bacterial microcompartment (BMC) concentrates low levels of 1,2-PD catabolic enzymes, concentrates volatile reaction intermediates thus enhancing pathway flux and keeps the level of toxic, mutagenic propionaldehyde low. This Citrobacter freundii protein is Phosphate propanoyltransferase.